The chain runs to 263 residues: 4-hydroxy-tetrahydrodipicolinate reductase (263 aa).

Gly10 to Met15 contributes to the NAD(+) binding site. Arg38 lines the NADP(+) pocket. NAD(+)-binding positions include Gly97 to Thr99 and Ala123 to Phe126. The active-site Proton donor/acceptor is His153. A (S)-2,3,4,5-tetrahydrodipicolinate-binding site is contributed by His154. Lys157 serves as the catalytic Proton donor. Position 163-164 (Gly163–Thr164) interacts with (S)-2,3,4,5-tetrahydrodipicolinate.

This sequence belongs to the DapB family.

It is found in the cytoplasm. The catalysed reaction is (S)-2,3,4,5-tetrahydrodipicolinate + NAD(+) + H2O = (2S,4S)-4-hydroxy-2,3,4,5-tetrahydrodipicolinate + NADH + H(+). It carries out the reaction (S)-2,3,4,5-tetrahydrodipicolinate + NADP(+) + H2O = (2S,4S)-4-hydroxy-2,3,4,5-tetrahydrodipicolinate + NADPH + H(+). The protein operates within amino-acid biosynthesis; L-lysine biosynthesis via DAP pathway; (S)-tetrahydrodipicolinate from L-aspartate: step 4/4. In terms of biological role, catalyzes the conversion of 4-hydroxy-tetrahydrodipicolinate (HTPA) to tetrahydrodipicolinate. In Dehalococcoides mccartyi (strain ATCC BAA-2100 / JCM 16839 / KCTC 5957 / BAV1), this protein is 4-hydroxy-tetrahydrodipicolinate reductase.